A 148-amino-acid chain; its full sequence is 3-hydroxyacyl-[acyl-carrier-protein] dehydratase FabZ (148 aa).

Residue His-49 is part of the active site.

It belongs to the thioester dehydratase family. FabZ subfamily.

Its subcellular location is the cytoplasm. The enzyme catalyses a (3R)-hydroxyacyl-[ACP] = a (2E)-enoyl-[ACP] + H2O. Its function is as follows. Involved in unsaturated fatty acids biosynthesis. Catalyzes the dehydration of short chain beta-hydroxyacyl-ACPs and long chain saturated and unsaturated beta-hydroxyacyl-ACPs. In Ehrlichia canis (strain Jake), this protein is 3-hydroxyacyl-[acyl-carrier-protein] dehydratase FabZ.